Consider the following 194-residue polypeptide: BCL2/adenovirus E1B 19 kDa protein-interacting protein 3 (194 aa).

Residues 1-102 form a disordered region; it reads MSQNGAPGMQ…SQSEEDDIER (102 aa). The span at 42-55 shows a compositional bias: basic and acidic residues; sequence DMEKILLDAQHESG. A phosphoserine mark is found at Ser-54, Ser-66, Ser-86, Ser-92, and Ser-95. The span at 56–69 shows a compositional bias: low complexity; it reads RSSSKSSHCDSPPR. Over residues 78-88 the composition is skewed to basic and acidic residues; the sequence is RASETDTHSIG. The short motif at 100–125 is the BH3 element; the sequence is IERRKEVESILKKNSDWIWDWSSRPE. A helical transmembrane segment spans residues 164–184; it reads VFLPSLLLSHLLAIGLGIYIG.

This sequence belongs to the NIP3 family. As to quaternary structure, homodimer. Binds to BCL2. Interacts with BNIP3L and ACAA2. Interacts (via BH3 domain) with SPATA18 (via coiled-coil domains). Interacts with BOK; promotes BOK oligomerization. Interacts with PPTC7; this interaction promotes BNIP3 degradation. (Microbial infection) Interacts with adenovirus E1B 19 kDa protein. In terms of assembly, (Microbial infection) Interacts with Epstein-Barr virus BHRF1.

It is found in the mitochondrion. Its subcellular location is the mitochondrion outer membrane. In terms of biological role, apoptosis-inducing protein that can overcome BCL2 suppression. May play a role in repartitioning calcium between the two major intracellular calcium stores in association with BCL2. Involved in mitochondrial quality control via its interaction with SPATA18/MIEAP: in response to mitochondrial damage, participates in mitochondrial protein catabolic process (also named MALM) leading to the degradation of damaged proteins inside mitochondria. The physical interaction of SPATA18/MIEAP, BNIP3 and BNIP3L/NIX at the mitochondrial outer membrane regulates the opening of a pore in the mitochondrial double membrane in order to mediate the translocation of lysosomal proteins from the cytoplasm to the mitochondrial matrix. Plays an important role in the calprotectin (S100A8/A9)-induced cell death pathway. This chain is BCL2/adenovirus E1B 19 kDa protein-interacting protein 3, found in Homo sapiens (Human).